A 20-amino-acid polypeptide reads, in one-letter code: Cruzioseptin-15 (20 aa).

As to expression, expressed by the skin glands.

Its subcellular location is the secreted. In terms of biological role, has antimicrobial activity. The sequence is that of Cruzioseptin-15 from Cruziohyla calcarifer (Splendid leaf frog).